The following is a 375-amino-acid chain: Probable neutral protease 2 homolog ARB_05817 (375 aa).

The signal sequence occupies residues 1-19 (MQVIVALAALGSLAAPALG). The propeptide occupies 20–189 (FSIPRGVPVS…RGPLTRINKR (170 aa)). Disulfide bonds link C197/C267 and C274/C292. H317 serves as a coordination point for Zn(2+). E318 is a catalytic residue. Residues H321 and D332 each contribute to the Zn(2+) site.

It belongs to the peptidase M35 family. Zn(2+) is required as a cofactor.

Its subcellular location is the secreted. The catalysed reaction is Preferential cleavage of bonds with hydrophobic residues in P1'. Also 3-Asn-|-Gln-4 and 8-Gly-|-Ser-9 bonds in insulin B chain.. Its function is as follows. Probable secreted metalloprotease that shows high activities on basic nuclear substrates such as histone and protamine. May be involved in virulence. The polypeptide is Probable neutral protease 2 homolog ARB_05817 (Arthroderma benhamiae (strain ATCC MYA-4681 / CBS 112371) (Trichophyton mentagrophytes)).